The following is a 170-amino-acid chain: Small ribosomal subunit protein uS5 (170 aa).

Residues 13–76 enclose the S5 DRBM domain; it reads LLEKLVGVRR…ENARKNMISV (64 aa).

It belongs to the universal ribosomal protein uS5 family. As to quaternary structure, part of the 30S ribosomal subunit. Contacts proteins S4 and S8.

Functionally, with S4 and S12 plays an important role in translational accuracy. In terms of biological role, located at the back of the 30S subunit body where it stabilizes the conformation of the head with respect to the body. In Nitrosococcus oceani (strain ATCC 19707 / BCRC 17464 / JCM 30415 / NCIMB 11848 / C-107), this protein is Small ribosomal subunit protein uS5.